The following is an 897-amino-acid chain: 4-hydroxyphenylacetate decarboxylase glycyl radical subunit (897 aa).

The 736-residue stretch at 35 to 770 folds into the PFL domain; it reads ESTQKLMDIY…VTLATADGRL (736 aa). The 4-hydroxyphenylacetate site is built by Ser344 and Cys503. Cys503 functions as the Cysteine radical intermediate in the catalytic mechanism. The active-site Proton donor is Glu505. 4-hydroxyphenylacetate-binding residues include His536 and Glu637. In terms of domain architecture, Glycine radical spans 778–897; the sequence is GSVSAAAGTD…EVIYRTEYDK (120 aa). Gly873 carries the glycine radical modification.

It belongs to the glycyl radical enzyme (GRE) family. HPAD subfamily. As to quaternary structure, heterooctamer consisting of 4 large (HpdB) subunits and 4 small (HpdC) subunits, arranged as a tetramer of heterodimers. Also forms a catalytically inactive homodimer. Post-translationally, requires the activating protein CsdA to generate the key active site glycyl radical that is involved in catalysis. In terms of processing, phosphorylated on serine. Phosphorylation may trigger the formation of the active heterooctamers and thereby regulates enzyme activity.

The catalysed reaction is 4-hydroxyphenylacetate + H(+) = 4-methylphenol + CO2. It carries out the reaction 3,4-dihydroxyphenylacetate + H(+) = 4-methylcatechol + CO2. In terms of biological role, glycyl radical subunit of the HPA decarboxylase that decarboxylates phenylacetates with a hydroxyl group in the p-position. Active toward 4-hydroxyphenylacetate and 3,4-dihydroxyphenylacetate, forming 4-methylphenol and 4-methylcatechol, respectively. Is likely involved in the catabolism of aromatic amino acids such as tyrosine fermentation. 4-methylphenol (p-cresol) formation provides metabolic toxicity, which allows an active suppression of other microbes and may provide growth advantages for the producers in highly competitive environments. The large subunit is the catalytic subunit that binds the substrate. The polypeptide is 4-hydroxyphenylacetate decarboxylase glycyl radical subunit (Clostridium scatologenes).